The chain runs to 273 residues: 4-hydroxy-tetrahydrodipicolinate reductase (273 aa).

NAD(+)-binding positions include 12 to 17 (GAGGRM) and E38. R39 is an NADP(+) binding site. NAD(+)-binding positions include 102-104 (GTT) and 126-129 (AANF). The active-site Proton donor/acceptor is H159. H160 is a binding site for (S)-2,3,4,5-tetrahydrodipicolinate. K163 acts as the Proton donor in catalysis. A (S)-2,3,4,5-tetrahydrodipicolinate-binding site is contributed by 169 to 170 (GT).

Belongs to the DapB family. As to quaternary structure, homotetramer.

The protein resides in the cytoplasm. It catalyses the reaction (S)-2,3,4,5-tetrahydrodipicolinate + NAD(+) + H2O = (2S,4S)-4-hydroxy-2,3,4,5-tetrahydrodipicolinate + NADH + H(+). The enzyme catalyses (S)-2,3,4,5-tetrahydrodipicolinate + NADP(+) + H2O = (2S,4S)-4-hydroxy-2,3,4,5-tetrahydrodipicolinate + NADPH + H(+). It functions in the pathway amino-acid biosynthesis; L-lysine biosynthesis via DAP pathway; (S)-tetrahydrodipicolinate from L-aspartate: step 4/4. Catalyzes the conversion of 4-hydroxy-tetrahydrodipicolinate (HTPA) to tetrahydrodipicolinate. The chain is 4-hydroxy-tetrahydrodipicolinate reductase from Salmonella typhimurium (strain LT2 / SGSC1412 / ATCC 700720).